The primary structure comprises 332 residues: GTP 3',8-cyclase (332 aa).

The region spanning 7 to 221 (QYERLHDYVR…FDLCKQAGLD (215 aa)) is the Radical SAM core domain. A GTP-binding site is contributed by Arg-16. Positions 23 and 27 each coordinate [4Fe-4S] cluster. Residue Tyr-29 participates in S-adenosyl-L-methionine binding. A [4Fe-4S] cluster-binding site is contributed by Cys-30. Arg-66 provides a ligand contact to GTP. Residue Gly-70 participates in S-adenosyl-L-methionine binding. Residue Thr-97 participates in GTP binding. Ser-121 is a binding site for S-adenosyl-L-methionine. Lys-158 is a binding site for GTP. Residue Met-192 participates in S-adenosyl-L-methionine binding. Cys-256 and Cys-259 together coordinate [4Fe-4S] cluster. A GTP-binding site is contributed by 261–263 (RLR). Residue Cys-273 coordinates [4Fe-4S] cluster.

The protein belongs to the radical SAM superfamily. MoaA family. Monomer and homodimer. [4Fe-4S] cluster serves as cofactor.

The catalysed reaction is GTP + AH2 + S-adenosyl-L-methionine = (8S)-3',8-cyclo-7,8-dihydroguanosine 5'-triphosphate + 5'-deoxyadenosine + L-methionine + A + H(+). It participates in cofactor biosynthesis; molybdopterin biosynthesis. Catalyzes the cyclization of GTP to (8S)-3',8-cyclo-7,8-dihydroguanosine 5'-triphosphate. This Limosilactobacillus fermentum (strain NBRC 3956 / LMG 18251) (Lactobacillus fermentum) protein is GTP 3',8-cyclase.